The following is a 332-amino-acid chain: Adenosine receptor A2b (332 aa).

Residues 1-8 (MLLETQDA) are Extracellular-facing. The chain crosses the membrane as a helical span at residues 9–33 (LYVALELVIAALSVAGNVLVCAAVG). The Cytoplasmic portion of the chain corresponds to 34 to 43 (TANTLQTPTN). Residues 44–67 (YFLVSLAAADVAVGLFAIPFAITI) traverse the membrane as a helical segment. Topologically, residues 68 to 78 (SLGFCTDFYGC) are extracellular. Cys78 and Cys171 form a disulfide bridge. A helical transmembrane segment spans residues 79-101 (LFLACFVLVLTQSSIFSLLAVAV). The Cytoplasmic portion of the chain corresponds to 102–121 (DRYLAICVPLRYKSLVTGTR). The chain crosses the membrane as a helical span at residues 122–144 (ARGVIAVLWVLAFGIGLTPFLGW). Residues 145 to 178 (NSKDSATNNCTEPWDGTTNESCCLVKCLFENVVP) lie on the Extracellular side of the membrane. N-linked (GlcNAc...) asparagine glycans are attached at residues Asn153 and Asn163. Position 174 (Glu174) interacts with adenosine. A helical transmembrane segment spans residues 179–203 (MSYMVYFNFFGCVLPPLLIMLVIYI). The Cytoplasmic portion of the chain corresponds to 204–235 (KIFLVACRQLQRTELMDHSRTTLQREIHAAKS). A helical transmembrane segment spans residues 236–259 (LAMIVGIFALCWLPVHAVNCVTLF). Position 254 (Asn254) interacts with adenosine. Topologically, residues 260–267 (QPAQGKNK) are extracellular. The chain crosses the membrane as a helical span at residues 268–291 (PKWAMNMAILLSHANSVVNPIVYA). Adenosine-binding residues include Ser279 and His280. The Cytoplasmic portion of the chain corresponds to 292–332 (YRNRDFRYTFHKIISRYLLCQADVKSGNGQAGVQPALGVGL). Cys311 is lipidated: S-palmitoyl cysteine.

Belongs to the G-protein coupled receptor 1 family.

The protein localises to the cell membrane. Functionally, receptor for adenosine. The activity of this receptor is mediated by G proteins which activate adenylyl cyclase. The chain is Adenosine receptor A2b (ADORA2B) from Homo sapiens (Human).